A 309-amino-acid chain; its full sequence is Porphobilinogen deaminase (309 aa).

Cys242 is subject to S-(dipyrrolylmethanemethyl)cysteine.

The protein belongs to the HMBS family. In terms of assembly, monomer. Dipyrromethane serves as cofactor.

The catalysed reaction is 4 porphobilinogen + H2O = hydroxymethylbilane + 4 NH4(+). It participates in porphyrin-containing compound metabolism; protoporphyrin-IX biosynthesis; coproporphyrinogen-III from 5-aminolevulinate: step 2/4. Tetrapolymerization of the monopyrrole PBG into the hydroxymethylbilane pre-uroporphyrinogen in several discrete steps. The polypeptide is Porphobilinogen deaminase (Shewanella sediminis (strain HAW-EB3)).